The chain runs to 755 residues: Cartilage oligomeric matrix protein (755 aa).

The first 19 residues, 1–19 (MSPTACVLVLALAALRATG), serve as a signal peptide directing secretion. The segment at 21 to 84 (GQIPLGGDLA…PARTPGLSVR (64 aa)) is COMP N-terminal. Residues 85 to 124 (PVALCAPGSCFPGVVCTETATGARCGPCPPGYTGNGSHCT) form the EGF-like 1 domain. 21 disulfides stabilise this stretch: Cys89-Cys100, Cys94-Cys109, Cys112-Cys123, Cys129-Cys140, Cys134-Cys149, Cys152-Cys176, Cys182-Cys195, Cys189-Cys204, Cys207-Cys219, Cys227-Cys241, Cys235-Cys251, Cys253-Cys264, Cys280-Cys285, Cys290-Cys310, Cys326-Cys346, Cys349-Cys369, Cys385-Cys405, Cys408-Cys428, Cys446-Cys466, Cys482-Cys502, and Cys518-Cys739. An N-linked (GlcNAc...) asparagine glycan is attached at Asn119. Residues 125 to 177 (DVNECNAHPCFPRVRCINTSPGFHCEACPPGFSGPTHEGVGLTFAKTNKQVCT) enclose the EGF-like 2; calcium-binding domain. An EGF-like 3; calcium-binding domain is found at 178–220 (DINECETGQHNCVPNSVCVNTRGSFQCGPCQPGFVGDQRSGCQ). The 43-residue stretch at 223 to 265 (GQHFCPDGSPSPCHEKADCILERDGSRSCVCAVGWAGNGLLCG) folds into the EGF-like 4 domain. 8 TSP type-3 repeats span residues 266-298 (RDTD…NSGQ), 299-334 (EDVD…NPDQ), 335-357 (RNSD…NDDQ), 358-393 (KDTD…NFDQ), 394-416 (SDSD…NPDQ), 417-454 (RDVD…NSAQ), 455-490 (QDSD…NPGQ), and 491-526 (EDND…EVTL). The disordered stretch occupies residues 295–501 (NSGQEDVDRD…DNDRDGVGDA (207 aa)). 2 stretches are compositionally biased toward basic and acidic residues: residues 332–344 (PDQR…KWGD) and 350–365 (RSQK…RDGQ). The residue at position 394 (Ser394) is a Phosphoserine. Composition is skewed to basic and acidic residues over residues 412 to 424 (DNPD…HDFV) and 456 to 465 (DSDHDGKGDA). Positions 525–755 (TLTDFRAFQT…DYERHRLRRA (231 aa)) are mediates cell survival and induction of the IAP family of survival proteins. The TSP C-terminal domain occupies 530 to 744 (RAFQTVVLDP…LRYRCNDTIP (215 aa)). Asn740 carries N-linked (GlcNAc...) asparagine glycosylation.

Belongs to the thrombospondin family. Pentamer; disulfide-linked. Exists in a more compact conformation in the presence of calcium and shows a more extended conformation in the absence of calcium. Interacts with ITGB3, ITGA5 and FN1. Binding to FN1 requires the presence of divalent cations (Ca(2+), Mg(2+) or Mn(2+)). The greatest amount of binding is seen in the presence of Mn(2+). Interacts with MATN1, MATN3, MATN4 and ACAN. Binds heparin, heparan sulfate and chondroitin sulfate. EDTA dimishes significantly its binding to ACAN and abolishes its binding to MATN3, MATN4 and chondroitin sulfate. Interacts with collagen I, II and IX, and interaction with these collagens is dependent on the presence of zinc ions. Interacts with ADAMTS12. Interacts with ITGA7. Ca(2+) is required as a cofactor. In terms of processing, proteolytically cleaved by metalloproteases ADAMTS4 and ADAMTS1 with ADAMTS4 showing more potent activity.

The protein resides in the secreted. The protein localises to the extracellular space. It is found in the extracellular matrix. Plays a role in the structural integrity of cartilage via its interaction with other extracellular matrix proteins such as the collagens and fibronectin. Can mediate the interaction of chondrocytes with the cartilage extracellular matrix through interaction with cell surface integrin receptors. Could play a role in the pathogenesis of osteoarthritis. Potent suppressor of apoptosis in both primary chondrocytes and transformed cells. Suppresses apoptosis by blocking the activation of caspase-3 and by inducing the IAP family of survival proteins (BIRC3, BIRC2, BIRC5 and XIAP). Essential for maintaining a vascular smooth muscle cells (VSMCs) contractile/differentiated phenotype under physiological and pathological stimuli. Maintains this phenotype of VSMCs by interacting with ITGA7. This is Cartilage oligomeric matrix protein from Rattus norvegicus (Rat).